Consider the following 66-residue polypeptide: Large ribosomal subunit protein bL31 (66 aa).

Positions 16, 18, 36, and 39 each coordinate Zn(2+).

It belongs to the bacterial ribosomal protein bL31 family. Type A subfamily. Part of the 50S ribosomal subunit. Zn(2+) serves as cofactor.

Binds the 23S rRNA. The chain is Large ribosomal subunit protein bL31 from Thermodesulfovibrio yellowstonii (strain ATCC 51303 / DSM 11347 / YP87).